A 71-amino-acid chain; its full sequence is Small ribosomal subunit protein bS21 (71 aa).

It belongs to the bacterial ribosomal protein bS21 family.

This is Small ribosomal subunit protein bS21 from Ruthia magnifica subsp. Calyptogena magnifica.